The primary structure comprises 238 residues: Chorionic somatomammotropin hormone 2 (238 aa).

A signal peptide spans 1–36 (MAPAPSFRGHQWTYNPVRGSCLLLLLVVSNLLLCQG). Histidine 66 provides a ligand contact to Zn(2+). 4 N-linked (GlcNAc...) asparagine glycosylation sites follow: asparagine 70, asparagine 92, asparagine 146, and asparagine 160. Cysteines 97 and 215 form a disulfide. Aspartate 224 contributes to the Zn(2+) binding site. Cysteine 232 and cysteine 238 are oxidised to a cystine.

It belongs to the somatotropin/prolactin family.

The protein resides in the secreted. This Bos taurus (Bovine) protein is Chorionic somatomammotropin hormone 2 (CSH2).